A 609-amino-acid polypeptide reads, in one-letter code: Adagio protein 1 (609 aa).

A compositionally biased stretch (low complexity) spans 1–17 (MEWDSGSDLSADDASSL). Positions 1-24 (MEWDSGSDLSADDASSLADDEEGG) are disordered. The PAS domain occupies 32–114 (IPYPVGNLLH…SEIRKCIDEG (83 aa)). The residue at position 82 (Cys82) is an S-4a-FMN cysteine. The 44-residue stretch at 118–161 (QGELLNFRKDGSPLMNRLRLTPIYGDDDTITHIIGIQFFIETDI) folds into the PAC domain. Positions 195 to 241 (CGLFQLSDEVVSMKILSRLTPRDVASVSSVCRRLYVLTKNEDLWRRV) constitute an F-box domain. Kelch repeat units follow at residues 292–342 (SRCN…SSPP), 345–392 (RWGH…SGLA), 397–445 (RSWH…PAAW), 450–501 (RLGH…TGSG), and 516–564 (RLDH…NIPG).

This sequence belongs to the ADAGIO family. As to quaternary structure, interacts with NFXL2. Interacts (via N-terminus) with GI and (via Kelch repeats) with ADO3. Component of an E3 ubiquitin ligase SCF(ADO1) complex composed of SKP1A/ASK1 (or SKP1B/ASK2), CUL1, RBX1 and ADO1. Also interacts with SKP1D/ASK4, SKP1K/ASK11, CRY1, PHYB, APRR1 and APRR5, and probably with SKP1N/ASK14 and SKP1S/ASK19. In terms of processing, may be ubiquitinated. Degraded in a proteasome-dependent manner. FMN binds covalently to cysteine after exposure to blue light and is reversed in the dark. In terms of tissue distribution, ubiquitously expressed with higher levels in cotyledons and leaves.

Its subcellular location is the nucleus. It is found in the cytoplasm. The protein operates within protein modification; protein ubiquitination. Its function is as follows. Component of an E3 ubiquitin ligase complex that plays a central role in blue light-dependent circadian cycles. Acts as a blue light photoreceptor, due to the presence of FMN, that mediates light-regulated protein degradation of critical clock components by targeting them to the proteasome complex. The SCF(ADO1) E3 ubiquitin ligase complex is involved in the regulation of circadian clock-dependent processes including the transition to flowering time, hypocotyl elongation, cotyledons and leaf movement rhythms. APRR1/TOC1 and APRR5, but not 'GIGANTEA', are proteolytic substrates of this ubiquitin ligase complex. Blue light enhances cooperative stabilization of 'GIGANTEA' and ADO1/ZTL, leading to amplification and sharpening of the expression profile of APRR1/TOC1. ADO1/ZTL interacts with ADO3, preventing the interaction of ADO3 with CDF1. In Arabidopsis thaliana (Mouse-ear cress), this protein is Adagio protein 1 (ADO1).